Reading from the N-terminus, the 319-residue chain is Thymidylate synthase (319 aa).

Residues arginine 25 and 181–182 contribute to the dUMP site; that span reads RR. Cysteine 201 (nucleophile) is an active-site residue. DUMP-binding positions include 221 to 224, asparagine 232, and 262 to 264; these read RSAD and HIY. Aspartate 224 is a binding site for (6R)-5,10-methylene-5,6,7,8-tetrahydrofolate. Position 318 (alanine 318) interacts with (6R)-5,10-methylene-5,6,7,8-tetrahydrofolate.

It belongs to the thymidylate synthase family. Bacterial-type ThyA subfamily. Homodimer.

It is found in the cytoplasm. It catalyses the reaction dUMP + (6R)-5,10-methylene-5,6,7,8-tetrahydrofolate = 7,8-dihydrofolate + dTMP. Its pathway is pyrimidine metabolism; dTTP biosynthesis. Catalyzes the reductive methylation of 2'-deoxyuridine-5'-monophosphate (dUMP) to 2'-deoxythymidine-5'-monophosphate (dTMP) while utilizing 5,10-methylenetetrahydrofolate (mTHF) as the methyl donor and reductant in the reaction, yielding dihydrofolate (DHF) as a by-product. This enzymatic reaction provides an intracellular de novo source of dTMP, an essential precursor for DNA biosynthesis. This is Thymidylate synthase from Oenococcus oeni (strain ATCC BAA-331 / PSU-1).